Consider the following 834-residue polypeptide: Protein translocase subunit SecA (834 aa).

ATP contacts are provided by residues Gln85, 103-107 (GEGKT), and Asp491. Zn(2+)-binding residues include Cys818, Cys820, Cys829, and Cys830.

The protein belongs to the SecA family. Monomer and homodimer. Part of the essential Sec protein translocation apparatus which comprises SecA, SecYEG and auxiliary proteins SecDF. Other proteins may also be involved. The cofactor is Zn(2+).

Its subcellular location is the cell membrane. The protein resides in the cytoplasm. The catalysed reaction is ATP + H2O + cellular proteinSide 1 = ADP + phosphate + cellular proteinSide 2.. Functionally, part of the Sec protein translocase complex. Interacts with the SecYEG preprotein conducting channel. Has a central role in coupling the hydrolysis of ATP to the transfer of proteins into and across the cell membrane, serving as an ATP-driven molecular motor driving the stepwise translocation of polypeptide chains across the membrane. The chain is Protein translocase subunit SecA from Clostridium kluyveri (strain ATCC 8527 / DSM 555 / NBRC 12016 / NCIMB 10680 / K1).